The following is a 181-amino-acid chain: Trans-acting factor D (181 aa).

In terms of biological role, plays a role in 2-micron plasmid partitioning. Antagonizes transcriptional repression of recombinase FLP by REP1-REP2. Regulates both stability and copy number of the plasmid by blocking the formation of the REP1-REP2 repressor complex. This Saccharomyces cerevisiae (strain ATCC 204508 / S288c) (Baker's yeast) protein is Trans-acting factor D.